The following is a 123-amino-acid chain: S-adenosylmethionine decarboxylase proenzyme 2 (123 aa).

Residue Ser-65 is the Schiff-base intermediate with substrate; via pyruvic acid of the active site. Residue Ser-65 is modified to Pyruvic acid (Ser); by autocatalysis. His-70 functions as the Proton acceptor; for processing activity in the catalytic mechanism. Cys-85 (proton donor; for catalytic activity) is an active-site residue.

It belongs to the prokaryotic AdoMetDC family. Type 1 subfamily. In terms of assembly, heterotetramer of two alpha and two beta chains arranged as a dimer of alpha/beta heterodimers. Pyruvate is required as a cofactor. In terms of processing, is synthesized initially as an inactive proenzyme. Formation of the active enzyme involves a self-maturation process in which the active site pyruvoyl group is generated from an internal serine residue via an autocatalytic post-translational modification. Two non-identical subunits are generated from the proenzyme in this reaction, and the pyruvate is formed at the N-terminus of the alpha chain, which is derived from the carboxyl end of the proenzyme. The post-translation cleavage follows an unusual pathway, termed non-hydrolytic serinolysis, in which the side chain hydroxyl group of the serine supplies its oxygen atom to form the C-terminus of the beta chain, while the remainder of the serine residue undergoes an oxidative deamination to produce ammonia and the pyruvoyl group blocking the N-terminus of the alpha chain.

It carries out the reaction S-adenosyl-L-methionine + H(+) = S-adenosyl 3-(methylsulfanyl)propylamine + CO2. Its pathway is amine and polyamine biosynthesis; S-adenosylmethioninamine biosynthesis; S-adenosylmethioninamine from S-adenosyl-L-methionine: step 1/1. Its function is as follows. Catalyzes the decarboxylation of S-adenosylmethionine to S-adenosylmethioninamine (dcAdoMet), the propylamine donor required for the synthesis of the polyamines spermine and spermidine from the diamine putrescine. The polypeptide is S-adenosylmethionine decarboxylase proenzyme 2 (Bacillus cereus (strain ATCC 14579 / DSM 31 / CCUG 7414 / JCM 2152 / NBRC 15305 / NCIMB 9373 / NCTC 2599 / NRRL B-3711)).